Reading from the N-terminus, the 391-residue chain is Multidrug resistance protein MdtL (391 aa).

Topologically, residues 1–3 (MSR) are cytoplasmic. The helical transmembrane segment at 4–24 (FLICSFALVLLYPAGIDMYLV) threads the bilayer. Over 25–41 (GLPRIAADLNASEAQLH) the chain is Periplasmic. Residues 42-62 (IAFSVYLAGMAAAMLFAGKVA) traverse the membrane as a helical segment. Over 63 to 68 (DRSGRK) the chain is Cytoplasmic. Residues 69-89 (PVAIPGAALFIIASVFCSLAE) traverse the membrane as a helical segment. Over 90–92 (TSA) the chain is Periplasmic. A helical membrane pass occupies residues 93–113 (LFLAGRFLQGLGAGCCYVVAF). At 114-130 (AILRDTLDDRRRAKVLS) the chain is on the cytoplasmic side. Residues 131–151 (LLNGITCIIPVLAPVLGHLIM) traverse the membrane as a helical segment. Residues 152–157 (LKFPWQ) lie on the Periplasmic side of the membrane. The helical transmembrane segment at 158 to 178 (SLFWTMATMGIAVLMLSLFIL) threads the bilayer. The Cytoplasmic segment spans residues 179 to 202 (KETRPAAPAASDKPRENSESLLNR). A helical membrane pass occupies residues 203–222 (FFLSRVVITTLSVSVILTFV). At 223–244 (NTSPVLLMEIMGFERGEYATIM) the chain is on the periplasmic side. Residues 245 to 265 (ALTAGVSMTVSFSTPFALGIF) traverse the membrane as a helical segment. The Cytoplasmic portion of the chain corresponds to 266–268 (KPR). The helical transmembrane segment at 269–289 (TLMITSQVLFLAAGITLAVSP) threads the bilayer. The Periplasmic portion of the chain corresponds to 290 to 292 (SHA). Residues 293-313 (VSLFGITLICAGFSVGFGVAM) form a helical membrane-spanning segment. At 314-330 (SQALGPFSLRAGVASST) the chain is on the cytoplasmic side. The chain crosses the membrane as a helical span at residues 331 to 351 (LGIAQVCGSSLWIWLAAVVGI). The Periplasmic portion of the chain corresponds to 352–355 (GAWN). The chain crosses the membrane as a helical span at residues 356–376 (MLIGILIACSIVSLLLIMFVA). Residues 377-391 (PGRPVAAHEEIHHHA) are Cytoplasmic-facing.

This sequence belongs to the major facilitator superfamily. DHA1 family. MdtL (TC 2.A.1.2.22) subfamily.

It is found in the cell inner membrane. Confers resistance to chloramphenicol. This chain is Multidrug resistance protein MdtL, found in Escherichia coli O6:K15:H31 (strain 536 / UPEC).